The sequence spans 118 residues: Inner membrane protein YhaI (118 aa).

The Periplasmic portion of the chain corresponds to methionine 1–methionine 25. The helical transmembrane segment at phenylalanine 26 to leucine 46 threads the bilayer. Position 47 (glutamate 47) is a topological domain, cytoplasmic. A helical transmembrane segment spans residues leucine 48 to isoleucine 68. Over arginine 69–serine 77 the chain is Periplasmic. The chain crosses the membrane as a helical span at residues glycine 78–phenylalanine 98. Residues cysteine 99 to asparagine 118 are Cytoplasmic-facing.

It to E.coli YhaH.

It localises to the cell inner membrane. The protein is Inner membrane protein YhaI (yhaI) of Escherichia coli O157:H7.